The following is a 156-amino-acid chain: S-ribosylhomocysteine lyase (156 aa).

Fe cation-binding residues include histidine 54, histidine 58, and cysteine 126.

This sequence belongs to the LuxS family. Homodimer. Fe cation is required as a cofactor.

It catalyses the reaction S-(5-deoxy-D-ribos-5-yl)-L-homocysteine = (S)-4,5-dihydroxypentane-2,3-dione + L-homocysteine. Its function is as follows. Involved in the synthesis of autoinducer 2 (AI-2) which is secreted by bacteria and is used to communicate both the cell density and the metabolic potential of the environment. The regulation of gene expression in response to changes in cell density is called quorum sensing. Catalyzes the transformation of S-ribosylhomocysteine (RHC) to homocysteine (HC) and 4,5-dihydroxy-2,3-pentadione (DPD). The protein is S-ribosylhomocysteine lyase of Shouchella clausii (strain KSM-K16) (Alkalihalobacillus clausii).